Consider the following 253-residue polypeptide: Ribulose bisphosphate carboxylase large chain (253 aa).

Substrate contacts are provided by Asn-35 and Thr-85. Lys-87 (proton acceptor) is an active-site residue. Lys-89 serves as a coordination point for substrate. The Mg(2+) site is built by Lys-113, Asp-115, and Glu-116. An N6-carboxylysine modification is found at Lys-113. The Proton acceptor role is filled by His-206. Arg-207 and His-239 together coordinate substrate.

It belongs to the RuBisCO large chain family. Type I subfamily. In terms of assembly, heterohexadecamer of 8 large chains and 8 small chains; disulfide-linked. The disulfide link is formed within the large subunit homodimers. Mg(2+) is required as a cofactor. In terms of processing, the disulfide bond which can form in the large chain dimeric partners within the hexadecamer appears to be associated with oxidative stress and protein turnover.

It localises to the plastid. It is found in the chloroplast. The catalysed reaction is 2 (2R)-3-phosphoglycerate + 2 H(+) = D-ribulose 1,5-bisphosphate + CO2 + H2O. The enzyme catalyses D-ribulose 1,5-bisphosphate + O2 = 2-phosphoglycolate + (2R)-3-phosphoglycerate + 2 H(+). Its function is as follows. RuBisCO catalyzes two reactions: the carboxylation of D-ribulose 1,5-bisphosphate, the primary event in carbon dioxide fixation, as well as the oxidative fragmentation of the pentose substrate in the photorespiration process. Both reactions occur simultaneously and in competition at the same active site. The polypeptide is Ribulose bisphosphate carboxylase large chain (rbcL) (Magnolia latahensis (Apocynophyllum latahense)).